The following is a 217-amino-acid chain: Vesicle transport through interaction with t-SNAREs homolog 1A (217 aa).

The Cytoplasmic portion of the chain corresponds to Met1 to Arg192. 2 coiled-coil regions span residues Pro31–Arg92 and Glu112–Ser178. Residues Ile193 to Ser213 form a helical membrane-spanning segment. The Extracellular portion of the chain corresponds to Val214–His217.

It belongs to the VTI1 family. As to quaternary structure, interacts with distinct SNARE complexes that contain either STX5 or STX6. Interacts with NAPA and, to a lesser extent, with NAPG. Identified in a complex containing STX6, STX12, VAMP4 and VTI1A.

The protein localises to the cytoplasmic vesicle. The protein resides in the golgi apparatus membrane. Functionally, V-SNARE that mediates vesicle transport pathways through interactions with t-SNAREs on the target membrane. These interactions are proposed to mediate aspects of the specificity of vesicle trafficking and to promote fusion of the lipid bilayers. Involved in vesicular transport from the late endosomes to the trans-Golgi network. Along with VAMP7, involved in an non-conventional RAB1-dependent traffic route to the cell surface used by KCNIP1 and KCND2. May be involved in increased cytokine secretion associated with cellular senescence. This Homo sapiens (Human) protein is Vesicle transport through interaction with t-SNAREs homolog 1A (VTI1A).